The primary structure comprises 220 residues: Octanoyltransferase (220 aa).

In terms of domain architecture, BPL/LPL catalytic spans 27–208; it reads PGTADEIWLC…QLARAHGQAV (182 aa). Substrate is bound by residues 66–73, 139–141, and 152–154; these read RGGQVTYH, ALG, and GLA. C170 acts as the Acyl-thioester intermediate in catalysis.

This sequence belongs to the LipB family.

The protein localises to the cytoplasm. The catalysed reaction is octanoyl-[ACP] + L-lysyl-[protein] = N(6)-octanoyl-L-lysyl-[protein] + holo-[ACP] + H(+). It functions in the pathway protein modification; protein lipoylation via endogenous pathway; protein N(6)-(lipoyl)lysine from octanoyl-[acyl-carrier-protein]: step 1/2. Functionally, catalyzes the transfer of endogenously produced octanoic acid from octanoyl-acyl-carrier-protein onto the lipoyl domains of lipoate-dependent enzymes. Lipoyl-ACP can also act as a substrate although octanoyl-ACP is likely to be the physiological substrate. The protein is Octanoyltransferase of Bordetella bronchiseptica (strain ATCC BAA-588 / NCTC 13252 / RB50) (Alcaligenes bronchisepticus).